A 486-amino-acid polypeptide reads, in one-letter code: NADH dehydrogenase [ubiquinone] flavoprotein 1, mitochondrial (486 aa).

The N-terminal 30 residues, 1-30 (MAPVRGILGLQRAVSIWKESNRLTPALRSF), are a transit peptide targeting the mitochondrion. Over residues 31–40 (STQAASTSTT) the composition is skewed to low complexity. The tract at residues 31–57 (STQAASTSTTPQPPPPPPPPEKTHFGG) is disordered. The span at 41-50 (PQPPPPPPPP) shows a compositional bias: pro residues. 110-119 (GRGGAGFPSG) is a binding site for NADH. 222–270 (FGAGAYICGEETALLESLEGKQGKPRLKPPFPANAGLYGCPTTVTNVET) is an FMN binding site. Positions 402, 405, 408, and 448 each coordinate [4Fe-4S] cluster.

The protein belongs to the complex I 51 kDa subunit family. As to quaternary structure, complex I is composed of at least 49 different subunits. This is a component of the flavoprotein-sulfur (FP) fragment of the enzyme. The cofactor is FMN. It depends on [4Fe-4S] cluster as a cofactor.

Its subcellular location is the mitochondrion inner membrane. It catalyses the reaction a ubiquinone + NADH + 5 H(+)(in) = a ubiquinol + NAD(+) + 4 H(+)(out). Its function is as follows. Core subunit of the mitochondrial membrane respiratory chain NADH dehydrogenase (Complex I) that is believed to belong to the minimal assembly required for catalysis. Complex I functions in the transfer of electrons from NADH to the respiratory chain. The immediate electron acceptor for the enzyme is believed to be ubiquinone. The polypeptide is NADH dehydrogenase [ubiquinone] flavoprotein 1, mitochondrial (Arabidopsis thaliana (Mouse-ear cress)).